Here is a 302-residue protein sequence, read N- to C-terminus: Dioxygenase olcK (302 aa).

The Fe cation site is built by His136, Asp138, and His213.

It belongs to the PhyH family. In terms of assembly, homodimer. Fe cation is required as a cofactor.

It is found in the peroxisome matrix. It functions in the pathway secondary metabolite biosynthesis; terpenoid biosynthesis. In terms of biological role, dioxygenase; part of the gene cluster that mediates the biosynthesis of 15-deoxyoxalicine B. The first step of the pathway is the synthesis of nicotinyl-CoA from nicotinic acid by the nicotinic acid-CoA ligase olcI. Nicotinyl-CoA is then a substrate of polyketide synthase olcA to produce 4-hydroxy-6-(3-pyridinyl)-2H-pyran-2-one (HPPO) which is further prenylated by the polyprenyl transferase olcH to yield geranylgeranyl-HPPO. Geranylgeranyl pyrophosphate is provided by the cluster-specific geranylgeranyl pyrophosphate synthase olcC. The FAD-dependent monooxygenase olcE catalyzes the epoxidation of geranylgeranyl-HPPO and the terpene cyclase olcD catalyzes the cyclization of the terpenoid component, resulting in the formation of the tricyclic terpene moiety seen in predecaturin E. The cytochrome P450 monooxygenase then catalyzes the allylic oxidation of predecaturin E, which is followed by spirocylization with concomitant loss of one molecule of water to form decaturin E. Decaturin E is the substrate of the cytochrome P450 monooxygenase olcJ which hydroxylates it at the C-29 position to form decaturin F. The short-chain dehydrogenase/reductase olcF may catalyze the oxidation of decaturin F to generate the 29-hydroxyl-27-one intermediate, and subsequent hemiacetal formation probably leads to the formation of decaturin C. The dioxygenase olcK may be a peroxisomal enzyme that catalyzes the hydroxylation of decaturin C into decaturin A once decaturin C is shuttled into the peroxisome by the MFS transporter olcL. Finally the cytochrome P450 monooxygenase olcB catalyzes the oxidative rearrangement to yield 15-deoxyoxalicine B. In the absence of olcJ, decaturin E may be shunted to a pathway in which it is oxidized to a ketone, possibly by olcF, to form decaturin D, which undergoes further allylic oxidation to yield decaturin G. Moreover, in the absence of oclK or oclL, oclB can convert decaturin C into 15-deoxyoxalicine A. This Penicillium canescens protein is Dioxygenase olcK.